Consider the following 312-residue polypeptide: Bifunctional pinoresinol-lariciresinol reductase (312 aa).

Residues 11–17, Arg36, and Lys45 each bind NADP(+); that span reads GGTGYIG. Lys138 (proton acceptor) is an active-site residue. Arg142 is an NADP(+) binding site. Position 270 (His270) interacts with substrate.

The protein belongs to the NmrA-type oxidoreductase family. Isoflavone reductase subfamily. As to quaternary structure, dimer.

The catalysed reaction is (+)-lariciresinol + NADP(+) = (+)-pinoresinol + NADPH + H(+). The enzyme catalyses (-)-secoisolariciresinol + NADP(+) = (+)-lariciresinol + NADPH + H(+). Its function is as follows. Reductase involved in lignan biosynthesis. Catalyzes the enantioselective sequential conversion of (+)-pinoresinol into (+)-lariciresinol and of (+)-lariciresinol into (-)-secoisolariciresinol. Abstracts the 4R-hydride from the NADPH cofactor during catalysis. The chain is Bifunctional pinoresinol-lariciresinol reductase from Thuja plicata (Western red-cedar).